A 223-amino-acid chain; its full sequence is MAQDQYKFVFTAKEAESEGVTEPMRLPNLIGKAMSLALAPISKYKVGAVGRARSGRIYLGVNVELPGLPLHHSIHAEQFLVTNLALNSEKGLHLLAVTISTDGNDFGAPCGNCRQFLMEISKALNIKILLKSKYEAEGSFKSLRLLLPDRFSPDDVLPKGSPLLLEKRHNCLSLSGSAEEICSSDCSHLKCKALAAANNSFSPYTNSPSGVALQDDDGNWYRG.

2 consecutive CMP/dCMP-type deaminase domains span residues 21–154 (TEPM…FSPD) and 184–223 (SDCS…WYRG). 62–64 (NVE) contributes to the substrate binding site. A Zn(2+)-binding site is contributed by His75. Catalysis depends on Glu77, which acts as the Proton donor. The Zn(2+) site is built by Cys110 and Cys113.

It belongs to the cytidine and deoxycytidylate deaminase family. Homodimer. The cofactor is Zn(2+).

The enzyme catalyses cytidine + H2O + H(+) = uridine + NH4(+). The catalysed reaction is 2'-deoxycytidine + H2O + H(+) = 2'-deoxyuridine + NH4(+). This enzyme scavenges exogenous and endogenous cytidine and 2'-deoxycytidine for UMP synthesis. The polypeptide is Cytidine deaminase 3 (CDA3) (Arabidopsis thaliana (Mouse-ear cress)).